The following is a 126-amino-acid chain: Glycine cleavage system H protein (126 aa).

The 83-residue stretch at 21 to 103 folds into the Lipoyl-binding domain; sequence TVTIGISEHA…YEGGWIVKVK (83 aa). Lysine 62 is subject to N6-lipoyllysine.

Belongs to the GcvH family. In terms of assembly, the glycine cleavage system is composed of four proteins: P, T, L and H. (R)-lipoate is required as a cofactor.

In terms of biological role, the glycine cleavage system catalyzes the degradation of glycine. The H protein shuttles the methylamine group of glycine from the P protein to the T protein. The sequence is that of Glycine cleavage system H protein from Vibrio vulnificus (strain CMCP6).